The primary structure comprises 96 residues: Large ribosomal subunit protein uL23 (96 aa).

This sequence belongs to the universal ribosomal protein uL23 family. In terms of assembly, part of the 50S ribosomal subunit. Contacts protein L29, and trigger factor when it is bound to the ribosome.

Its function is as follows. One of the early assembly proteins it binds 23S rRNA. One of the proteins that surrounds the polypeptide exit tunnel on the outside of the ribosome. Forms the main docking site for trigger factor binding to the ribosome. The polypeptide is Large ribosomal subunit protein uL23 (Caldicellulosiruptor bescii (strain ATCC BAA-1888 / DSM 6725 / KCTC 15123 / Z-1320) (Anaerocellum thermophilum)).